The sequence spans 189 residues: 3-hydroxyanthranilate 3,4-dioxygenase (189 aa).

O2 is bound at residue Arg-49. Positions 53, 59, and 97 each coordinate Fe cation. Residue Glu-59 participates in substrate binding. Positions 101 and 112 each coordinate substrate. Residues Cys-127, Cys-130, Cys-165, and Cys-168 each coordinate Fe cation.

The protein belongs to the 3-HAO family. In terms of assembly, homodimer. The cofactor is Fe(2+).

It catalyses the reaction 3-hydroxyanthranilate + O2 = (2Z,4Z)-2-amino-3-carboxymuconate 6-semialdehyde. Its pathway is cofactor biosynthesis; NAD(+) biosynthesis; quinolinate from L-kynurenine: step 3/3. Catalyzes the oxidative ring opening of 3-hydroxyanthranilate to 2-amino-3-carboxymuconate semialdehyde, which spontaneously cyclizes to quinolinate. This Cupriavidus pinatubonensis (strain JMP 134 / LMG 1197) (Cupriavidus necator (strain JMP 134)) protein is 3-hydroxyanthranilate 3,4-dioxygenase.